The sequence spans 88 residues: Small ribosomal subunit protein uS15 (88 aa).

This sequence belongs to the universal ribosomal protein uS15 family. Part of the 30S ribosomal subunit. Forms a bridge to the 50S subunit in the 70S ribosome, contacting the 23S rRNA.

Its function is as follows. One of the primary rRNA binding proteins, it binds directly to 16S rRNA where it helps nucleate assembly of the platform of the 30S subunit by binding and bridging several RNA helices of the 16S rRNA. In terms of biological role, forms an intersubunit bridge (bridge B4) with the 23S rRNA of the 50S subunit in the ribosome. This Leptospira biflexa serovar Patoc (strain Patoc 1 / Ames) protein is Small ribosomal subunit protein uS15.